The primary structure comprises 154 residues: Interleukin-2 (154 aa).

A signal peptide spans 1 to 20; it reads MYRMQLLSCIALSLALITNS. Thr-23 carries O-linked (GalNAc...) threonine glycosylation. Residues Cys-78 and Cys-126 are joined by a disulfide bond.

This sequence belongs to the IL-2 family.

The protein resides in the secreted. Functionally, cytokine produced by activated CD4-positive helper T-cells and to a lesser extend activated CD8-positive T-cells and natural killer (NK) cells that plays pivotal roles in the immune response and tolerance. Binds to a receptor complex composed of either the high-affinity trimeric IL-2R (IL2RA/CD25, IL2RB/CD122 and IL2RG/CD132) or the low-affinity dimeric IL-2R (IL2RB and IL2RG). Interaction with the receptor leads to oligomerization and conformation changes in the IL-2R subunits resulting in downstream signaling starting with phosphorylation of JAK1 and JAK3. In turn, JAK1 and JAK3 phosphorylate the receptor to form a docking site leading to the phosphorylation of several substrates including STAT5. This process leads to activation of several pathways including STAT, phosphoinositide-3-kinase/PI3K and mitogen-activated protein kinase/MAPK pathways. Functions as a T-cell growth factor and can increase NK-cell cytolytic activity as well. Promotes strong proliferation of activated B-cells and subsequently immunoglobulin production. Plays a pivotal role in regulating the adaptive immune system by controlling the survival and proliferation of regulatory T-cells, which are required for the maintenance of immune tolerance. Moreover, participates in the differentiation and homeostasis of effector T-cell subsets, including Th1, Th2, Th17 as well as memory CD8-positive T-cells. The polypeptide is Interleukin-2 (IL2) (Saimiri sciureus (Common squirrel monkey)).